A 140-amino-acid chain; its full sequence is Nucleoside diphosphate kinase (140 aa).

6 residues coordinate ATP: lysine 11, phenylalanine 59, arginine 87, threonine 93, arginine 104, and asparagine 114. Histidine 117 functions as the Pros-phosphohistidine intermediate in the catalytic mechanism.

The protein belongs to the NDK family. Homotetramer. Mg(2+) serves as cofactor.

The protein resides in the cytoplasm. It carries out the reaction a 2'-deoxyribonucleoside 5'-diphosphate + ATP = a 2'-deoxyribonucleoside 5'-triphosphate + ADP. The catalysed reaction is a ribonucleoside 5'-diphosphate + ATP = a ribonucleoside 5'-triphosphate + ADP. Major role in the synthesis of nucleoside triphosphates other than ATP. The ATP gamma phosphate is transferred to the NDP beta phosphate via a ping-pong mechanism, using a phosphorylated active-site intermediate. In Rhodospirillum centenum (strain ATCC 51521 / SW), this protein is Nucleoside diphosphate kinase.